Here is a 792-residue protein sequence, read N- to C-terminus: Coiled-coil domain-containing protein R3HCC1L (792 aa).

An EJC-binding motif; may mediate interaction with the EJC region spans residues 7 to 27 (RCRVRARRPDMALYVPKARRG). Disordered regions lie at residues 32–61 (KTGD…QKEV) and 527–567 (EFKT…TSHT). At Ser688 the chain carries Phosphoserine. At Thr712 the chain carries Phosphothreonine. Residues 751–783 (RSKQSKTEREAELKKLQEARERKRLEAKQREDI) are a coiled coil. A disordered region spans residues 772 to 792 (RKRLEAKQREDIWEGRDQSTV).

In terms of assembly, may interact with the exon junction complex (EJC) composed at least of CASC3, EIF4A3, MAGOH and RBM8A. As to expression, expressed in placenta.

This Homo sapiens (Human) protein is Coiled-coil domain-containing protein R3HCC1L (R3HCC1L).